The following is a 397-amino-acid chain: 2,6-dihydroxypyridine 3-monooxygenase (397 aa).

FAD is bound by residues 14–16 (SIS), 35–36 (ER), valine 49, leucine 120, aspartate 306, and 316–320 (AAGGA).

In terms of assembly, homodimer. It depends on FAD as a cofactor.

The catalysed reaction is 2,6-dihydroxypyridine + NADH + O2 + H(+) = 2,3,6-trihydroxypyridine + NAD(+) + H2O. The protein operates within alkaloid degradation; nicotine degradation. Functionally, catalyzes the conversion of 2,6-dihydroxypyridine into 2,3,6-trihydroxypyridine in the nicotine degradation pathway. This Paenarthrobacter nicotinovorans (Arthrobacter nicotinovorans) protein is 2,6-dihydroxypyridine 3-monooxygenase (dhpH).